The sequence spans 258 residues: 5-oxoprolinase subunit A (258 aa).

Belongs to the LamB/PxpA family. As to quaternary structure, forms a complex composed of PxpA, PxpB and PxpC.

The catalysed reaction is 5-oxo-L-proline + ATP + 2 H2O = L-glutamate + ADP + phosphate + H(+). In terms of biological role, catalyzes the cleavage of 5-oxoproline to form L-glutamate coupled to the hydrolysis of ATP to ADP and inorganic phosphate. This is 5-oxoprolinase subunit A from Corynebacterium jeikeium (strain K411).